The chain runs to 266 residues: Undecaprenyl-diphosphatase (266 aa).

The next 7 membrane-spanning stretches (helical) occupy residues Asn-41 to Trp-61, Thr-80 to Phe-100, Ile-107 to Ala-127, Ile-140 to Leu-160, Leu-180 to Val-200, Ile-213 to Cys-233, and Leu-245 to Leu-265.

Belongs to the UppP family.

It is found in the cell inner membrane. It carries out the reaction di-trans,octa-cis-undecaprenyl diphosphate + H2O = di-trans,octa-cis-undecaprenyl phosphate + phosphate + H(+). Its function is as follows. Catalyzes the dephosphorylation of undecaprenyl diphosphate (UPP). Confers resistance to bacitracin. This chain is Undecaprenyl-diphosphatase, found in Parabacteroides distasonis (strain ATCC 8503 / DSM 20701 / CIP 104284 / JCM 5825 / NCTC 11152).